The primary structure comprises 367 residues: Apurinic-apyrimidinic endonuclease 1 (367 aa).

Residues His-83, His-123, Glu-158, Asp-192, His-195, His-229, Asp-242, His-244, and Glu-274 each coordinate Zn(2+). Positions Asp-312 to Glu-367 are disordered. A compositionally biased stretch (basic and acidic residues) spans Ser-321–Lys-332. Residues Gln-333–Lys-344 are compositionally biased toward basic residues. Ser-356 is subject to Phosphoserine.

It belongs to the AP endonuclease 2 family. Monomer. Requires Zn(2+) as cofactor.

The protein resides in the nucleus. Its function is as follows. DNA repair enzyme that cleaves apurinic/apyrimidinic (AP) sites and removes 3'-blocking groups present at single strand breaks of damaged DNA. APN1 accounts for &gt; 97% of both apurinic/apyrimidinic (AP) endonuclease and DNA 3'-repair diesterase activities. The sequence is that of Apurinic-apyrimidinic endonuclease 1 (APN1) from Saccharomyces cerevisiae (strain ATCC 204508 / S288c) (Baker's yeast).